A 236-amino-acid polypeptide reads, in one-letter code: 1-(5-phosphoribosyl)-5-[(5-phosphoribosylamino)methylideneamino] imidazole-4-carboxamide isomerase (236 aa).

D8 serves as the catalytic Proton acceptor. The Proton donor role is filled by D127.

The protein belongs to the HisA/HisF family.

The protein localises to the cytoplasm. The catalysed reaction is 1-(5-phospho-beta-D-ribosyl)-5-[(5-phospho-beta-D-ribosylamino)methylideneamino]imidazole-4-carboxamide = 5-[(5-phospho-1-deoxy-D-ribulos-1-ylimino)methylamino]-1-(5-phospho-beta-D-ribosyl)imidazole-4-carboxamide. Its pathway is amino-acid biosynthesis; L-histidine biosynthesis; L-histidine from 5-phospho-alpha-D-ribose 1-diphosphate: step 4/9. The polypeptide is 1-(5-phosphoribosyl)-5-[(5-phosphoribosylamino)methylideneamino] imidazole-4-carboxamide isomerase (Campylobacter hominis (strain ATCC BAA-381 / DSM 21671 / CCUG 45161 / LMG 19568 / NCTC 13146 / CH001A)).